Here is a 159-residue protein sequence, read N- to C-terminus: Protein US8.5 (159 aa).

The interval S27–G107 is disordered. Residues S80–P91 show a composition bias toward basic and acidic residues.

Belongs to the HHV-1 US8.5 protein family. In terms of processing, phosphorylated.

It is found in the host nucleus. Its subcellular location is the host nucleolus. The chain is Protein US8.5 from Human herpesvirus 1 (strain 17) (HHV-1).